Reading from the N-terminus, the 147-residue chain is Sulfur acceptor protein CsdE (147 aa).

Residue C61 is the Cysteine persulfide intermediate of the active site. A Cysteine persulfide modification is found at C61.

This sequence belongs to the SufE family. Homodimer. Forms a heterodimer with CsdA. Interacts with CsdA and with TcdA/CsdL.

Its function is as follows. Stimulates the cysteine desulfurase activity of CsdA. Contains a cysteine residue (Cys-61) that acts to accept sulfur liberated via the desulfurase activity of CsdA. May be able to transfer sulfur to TcdA/CsdL. Seems to support the function of TcdA in the generation of cyclic threonylcarbamoyladenosine at position 37 (ct(6)A37) in tRNAs that read codons beginning with adenine. Does not appear to participate in Fe/S biogenesis. In Escherichia coli (strain K12), this protein is Sulfur acceptor protein CsdE (csdE).